Here is a 498-residue protein sequence, read N- to C-terminus: Putrescine N-hydroxylase (498 aa).

Residues Phe-23, Asp-43, Lys-45, Trp-50, His-51, and Gln-62 each contribute to the FAD site. NADP(+) is bound by residues Gln-62 and Arg-104. Residue Val-127 coordinates FAD. Ser-207, Arg-231, Tyr-275, and Leu-309 together coordinate NADP(+). Residues Asn-386, Pro-397, and Leu-399 each coordinate FAD. Residues 443–474 (LESNTHSAVTPSKTRQGLNPSAKSVQQPSIEP) are compositionally biased toward polar residues. The disordered stretch occupies residues 443-498 (LESNTHSAVTPSKTRQGLNPSAKSVQQPSIEPQTALRIAPTGGNVSALMAPNKEAQ).

Belongs to the lysine N(6)-hydroxylase/L-ornithine N(5)-oxygenase family. FAD serves as cofactor.

It catalyses the reaction putrescine + NADPH + O2 = N-hydroxyputrescine + NADP(+) + H2O. It functions in the pathway siderophore biosynthesis. Its function is as follows. N-hydroxylating monooxygenase involved in the biosynthesis of the siderophore putrebactin. Catalyzes the N-hydroxylation of the aliphatic diamine putrescine into N-hydroxyputrescine (NHP). The sequence is that of Putrescine N-hydroxylase from Shewanella oneidensis (strain ATCC 700550 / JCM 31522 / CIP 106686 / LMG 19005 / NCIMB 14063 / MR-1).